The sequence spans 861 residues: Probable linoleate 9S-lipoxygenase 8 (861 aa).

The 128-residue stretch at 33-160 (FTDLASSLTG…NYKSDRIFFA (128 aa)) folds into the PLAT domain. The 699-residue stretch at 163–861 (PYLPSETPEL…GKGIPNSVSI (699 aa)) folds into the Lipoxygenase domain. Positions 220–245 (TLGGSAEYPYPRRGRTGRPPTRTDPK) are disordered. The Fe cation site is built by His-522, His-527, His-713, Asn-717, and Ile-861.

Belongs to the lipoxygenase family. Monomer. Requires Fe cation as cofactor.

The protein resides in the cytoplasm. It catalyses the reaction (9Z,12Z)-octadecadienoate + O2 = (9S)-hydroperoxy-(10E,12Z)-octadecadienoate. Its pathway is lipid metabolism; oxylipin biosynthesis. Its function is as follows. Plant lipoxygenases may be involved in a number of diverse aspects of plant physiology including growth and development, pest resistance, and senescence or responses to wounding. Catalyzes the hydroperoxidation of lipids containing a cis,cis-1,4-pentadiene structure. The sequence is that of Probable linoleate 9S-lipoxygenase 8 (LOX1.8) from Solanum tuberosum (Potato).